The sequence spans 132 residues: Large ribosomal subunit protein bL17 (132 aa).

Belongs to the bacterial ribosomal protein bL17 family. As to quaternary structure, part of the 50S ribosomal subunit. Contacts protein L32.

This is Large ribosomal subunit protein bL17 from Saccharophagus degradans (strain 2-40 / ATCC 43961 / DSM 17024).